The following is a 931-amino-acid chain: Bifunctional glutamine synthetase adenylyltransferase/adenylyl-removing enzyme (931 aa).

An adenylyl removase region spans residues Met1–Pro434. Positions Pro441–Ala931 are adenylyl transferase.

The protein belongs to the GlnE family. The cofactor is Mg(2+).

The catalysed reaction is [glutamine synthetase]-O(4)-(5'-adenylyl)-L-tyrosine + phosphate = [glutamine synthetase]-L-tyrosine + ADP. The enzyme catalyses [glutamine synthetase]-L-tyrosine + ATP = [glutamine synthetase]-O(4)-(5'-adenylyl)-L-tyrosine + diphosphate. Involved in the regulation of glutamine synthetase GlnA, a key enzyme in the process to assimilate ammonia. When cellular nitrogen levels are high, the C-terminal adenylyl transferase (AT) inactivates GlnA by covalent transfer of an adenylyl group from ATP to specific tyrosine residue of GlnA, thus reducing its activity. Conversely, when nitrogen levels are low, the N-terminal adenylyl removase (AR) activates GlnA by removing the adenylyl group by phosphorolysis, increasing its activity. The regulatory region of GlnE binds the signal transduction protein PII (GlnB) which indicates the nitrogen status of the cell. The chain is Bifunctional glutamine synthetase adenylyltransferase/adenylyl-removing enzyme from Stenotrophomonas maltophilia (strain R551-3).